The following is a 206-amino-acid chain: Glycerol-3-phosphate acyltransferase (206 aa).

A run of 5 helical transmembrane segments spans residues 14 to 34 (IALA…GLIL), 67 to 87 (ATLL…GYFL), 91 to 111 (AAII…WIGF), 124 to 144 (LLGV…AVAF), and 148 to 168 (YSSL…LILG).

Belongs to the PlsY family. Probably interacts with PlsX.

Its subcellular location is the cell inner membrane. It catalyses the reaction an acyl phosphate + sn-glycerol 3-phosphate = a 1-acyl-sn-glycero-3-phosphate + phosphate. Its pathway is lipid metabolism; phospholipid metabolism. Its function is as follows. Catalyzes the transfer of an acyl group from acyl-phosphate (acyl-PO(4)) to glycerol-3-phosphate (G3P) to form lysophosphatidic acid (LPA). This enzyme utilizes acyl-phosphate as fatty acyl donor, but not acyl-CoA or acyl-ACP. In Rhizobium etli (strain CIAT 652), this protein is Glycerol-3-phosphate acyltransferase.